Reading from the N-terminus, the 341-residue chain is L-threonine 3-dehydrogenase (341 aa).

Cys-38 contacts Zn(2+). Residues Thr-40 and His-43 each act as charge relay system in the active site. 6 residues coordinate Zn(2+): His-63, Glu-64, Cys-93, Cys-96, Cys-99, and Cys-107. NAD(+) is bound by residues Ile-175, Asp-195, Arg-200, Leu-262–Ile-264, and Ile-286–Tyr-287.

Belongs to the zinc-containing alcohol dehydrogenase family. In terms of assembly, homotetramer. It depends on Zn(2+) as a cofactor.

It localises to the cytoplasm. The enzyme catalyses L-threonine + NAD(+) = (2S)-2-amino-3-oxobutanoate + NADH + H(+). It functions in the pathway amino-acid degradation; L-threonine degradation via oxydo-reductase pathway; glycine from L-threonine: step 1/2. In terms of biological role, catalyzes the NAD(+)-dependent oxidation of L-threonine to 2-amino-3-ketobutyrate. The polypeptide is L-threonine 3-dehydrogenase (Pseudoalteromonas translucida (strain TAC 125)).